Here is a 338-residue protein sequence, read N- to C-terminus: Large ribosomal subunit protein uL3 (338 aa).

The span at 228-237 shows a compositional bias: basic residues; that stretch reads HKHRKGHRRT. Positions 228–255 are disordered; the sequence is HKHRKGHRRTGTIGPQAPALMFTQPRPG.

Belongs to the universal ribosomal protein uL3 family. As to quaternary structure, part of the 50S ribosomal subunit. Forms a cluster with proteins L14 and L24e.

Its function is as follows. One of the primary rRNA binding proteins, it binds directly near the 3'-end of the 23S rRNA, where it nucleates assembly of the 50S subunit. The protein is Large ribosomal subunit protein uL3 of Pyrobaculum calidifontis (strain DSM 21063 / JCM 11548 / VA1).